Here is a 224-residue protein sequence, read N- to C-terminus: tRNA pseudouridine synthase B (224 aa).

Catalysis depends on Asp-46, which acts as the Nucleophile.

The protein belongs to the pseudouridine synthase TruB family. Type 1 subfamily.

It carries out the reaction uridine(55) in tRNA = pseudouridine(55) in tRNA. Responsible for synthesis of pseudouridine from uracil-55 in the psi GC loop of transfer RNAs. This Methylococcus capsulatus (strain ATCC 33009 / NCIMB 11132 / Bath) protein is tRNA pseudouridine synthase B.